Here is a 333-residue protein sequence, read N- to C-terminus: tRNA N6-adenosine threonylcarbamoyltransferase (333 aa).

2 residues coordinate Fe cation: His-118 and His-122. Residues 140-144 (VVSGG), Asp-173, Gly-186, and Asn-274 contribute to the substrate site. Asp-298 is a Fe cation binding site.

The protein belongs to the KAE1 / TsaD family. Fe(2+) is required as a cofactor.

The protein resides in the cytoplasm. The enzyme catalyses L-threonylcarbamoyladenylate + adenosine(37) in tRNA = N(6)-L-threonylcarbamoyladenosine(37) in tRNA + AMP + H(+). Functionally, required for the formation of a threonylcarbamoyl group on adenosine at position 37 (t(6)A37) in tRNAs that read codons beginning with adenine. Is involved in the transfer of the threonylcarbamoyl moiety of threonylcarbamoyl-AMP (TC-AMP) to the N6 group of A37, together with TsaE and TsaB. TsaD likely plays a direct catalytic role in this reaction. The chain is tRNA N6-adenosine threonylcarbamoyltransferase from Deinococcus geothermalis (strain DSM 11300 / CIP 105573 / AG-3a).